We begin with the raw amino-acid sequence, 663 residues long: UvrABC system protein B (663 aa).

Residues Asp26–Pro414 form the Helicase ATP-binding domain. Residue Gly39–Thr46 coordinates ATP. The short motif at Tyr92–Ile115 is the Beta-hairpin element. Residues Gln430–Leu596 enclose the Helicase C-terminal domain. In terms of domain architecture, UVR spans Val624–Gln659.

Belongs to the UvrB family. As to quaternary structure, forms a heterotetramer with UvrA during the search for lesions. Interacts with UvrC in an incision complex.

The protein localises to the cytoplasm. In terms of biological role, the UvrABC repair system catalyzes the recognition and processing of DNA lesions. A damage recognition complex composed of 2 UvrA and 2 UvrB subunits scans DNA for abnormalities. Upon binding of the UvrA(2)B(2) complex to a putative damaged site, the DNA wraps around one UvrB monomer. DNA wrap is dependent on ATP binding by UvrB and probably causes local melting of the DNA helix, facilitating insertion of UvrB beta-hairpin between the DNA strands. Then UvrB probes one DNA strand for the presence of a lesion. If a lesion is found the UvrA subunits dissociate and the UvrB-DNA preincision complex is formed. This complex is subsequently bound by UvrC and the second UvrB is released. If no lesion is found, the DNA wraps around the other UvrB subunit that will check the other stand for damage. The sequence is that of UvrABC system protein B from Legionella pneumophila subsp. pneumophila (strain Philadelphia 1 / ATCC 33152 / DSM 7513).